We begin with the raw amino-acid sequence, 366 residues long: Mitochondrial substrate carrier family protein H (366 aa).

The segment covering 1-25 (MLSNSVNNNNNNNNINNSNSNNNDS) has biased composition (low complexity). The segment at 1 to 26 (MLSNSVNNNNNNNNINNSNSNNNDSN) is disordered. 3 Solcar repeats span residues 29-121 (KNVK…LKEY), 132-243 (NIYT…LKNK), and 259-360 (SPFF…IKQS). 6 helical membrane-spanning segments follow: residues 35–55 (MVAS…LDVV), 96–112 (GVTP…TIYF), 133–151 (IYTV…SASV), 175–192 (VAMA…IPLS), 262–282 (FINF…TTPI), and 340–357 (VAKV…FEYI).

It belongs to the mitochondrial carrier (TC 2.A.29) family.

Its subcellular location is the mitochondrion inner membrane. In terms of biological role, mitochondrial transporter required for glutathione import into mitochondria. This Dictyostelium discoideum (Social amoeba) protein is Mitochondrial substrate carrier family protein H.